The chain runs to 129 residues: uncharacterized protein (129 aa).

It belongs to the asfivirus C129R family.

It is found in the virion. Plays a role in the inhibition of type I interferon signaling pathway. Mechanistically, specifically interacts with 2',3'-cGAMP and cleaves it via its phosphodiesterase activity. In turn, prevents 2',3'-cGAMP interaction with host ER-resident STING1 leading to inhibition of downstream signaling pathway and type I interferon production. This is an uncharacterized protein from Ornithodoros (relapsing fever ticks).